Consider the following 257-residue polypeptide: Phycoerythrobilin:ferredoxin oxidoreductase (257 aa).

It belongs to the HY2 family.

The catalysed reaction is (3Z)-phycoerythrobilin + oxidized 2[4Fe-4S]-[ferredoxin] = 15,16-dihydrobiliverdin + reduced 2[4Fe-4S]-[ferredoxin] + 2 H(+). In terms of biological role, catalyzes the two-electron reduction of the C2 and C3(1) diene system of 15,16-dihydrobiliverdin. This chain is Phycoerythrobilin:ferredoxin oxidoreductase, found in Prochlorococcus marinus (strain MIT 9303).